The primary structure comprises 178 residues: Bifunctional protein PyrR (178 aa).

The PRPP-binding motif lies at 99–111 (IILVDDVLFTGRT).

This sequence belongs to the purine/pyrimidine phosphoribosyltransferase family. PyrR subfamily. Homodimer and homohexamer; in equilibrium.

It catalyses the reaction UMP + diphosphate = 5-phospho-alpha-D-ribose 1-diphosphate + uracil. Its function is as follows. Regulates transcriptional attenuation of the pyrimidine nucleotide (pyr) operon by binding in a uridine-dependent manner to specific sites on pyr mRNA. This disrupts an antiterminator hairpin in the RNA and favors formation of a downstream transcription terminator, leading to a reduced expression of downstream genes. In terms of biological role, also displays a weak uracil phosphoribosyltransferase activity which is not physiologically significant. This chain is Bifunctional protein PyrR, found in Clostridium novyi (strain NT).